We begin with the raw amino-acid sequence, 199 residues long: Potassium-transporting ATPase KdpC subunit (199 aa).

A helical transmembrane segment spans residues 7 to 27 (PALVMTAALCLITGIIYPGLI).

Belongs to the KdpC family. The system is composed of three essential subunits: KdpA, KdpB and KdpC.

The protein resides in the cell inner membrane. Functionally, part of the high-affinity ATP-driven potassium transport (or Kdp) system, which catalyzes the hydrolysis of ATP coupled with the electrogenic transport of potassium into the cytoplasm. This subunit acts as a catalytic chaperone that increases the ATP-binding affinity of the ATP-hydrolyzing subunit KdpB by the formation of a transient KdpB/KdpC/ATP ternary complex. In Gemmatimonas aurantiaca (strain DSM 14586 / JCM 11422 / NBRC 100505 / T-27), this protein is Potassium-transporting ATPase KdpC subunit.